Here is a 619-residue protein sequence, read N- to C-terminus: 1-deoxy-D-xylulose-5-phosphate synthase (619 aa).

Residues His-74 and 115-117 each bind thiamine diphosphate; that span reads GHS. Asp-146 lines the Mg(2+) pocket. Residues 147-148, Asn-175, and Tyr-285 contribute to the thiamine diphosphate site; that span reads GA. A Mg(2+)-binding site is contributed by Asn-175. The segment at 289-310 is disordered; the sequence is EKSPSKYHGIPPSNDKKEEPNK. Glu-365 is a thiamine diphosphate binding site.

The protein belongs to the transketolase family. DXPS subfamily. Homodimer. Mg(2+) is required as a cofactor. The cofactor is thiamine diphosphate.

It carries out the reaction D-glyceraldehyde 3-phosphate + pyruvate + H(+) = 1-deoxy-D-xylulose 5-phosphate + CO2. Its pathway is metabolic intermediate biosynthesis; 1-deoxy-D-xylulose 5-phosphate biosynthesis; 1-deoxy-D-xylulose 5-phosphate from D-glyceraldehyde 3-phosphate and pyruvate: step 1/1. Functionally, catalyzes the acyloin condensation reaction between C atoms 2 and 3 of pyruvate and glyceraldehyde 3-phosphate to yield 1-deoxy-D-xylulose-5-phosphate (DXP). In Clostridium botulinum (strain Alaska E43 / Type E3), this protein is 1-deoxy-D-xylulose-5-phosphate synthase.